The chain runs to 347 residues: Olfactory receptor 2M2 (347 aa).

Over 1–25 (MAWENQTFNSDFILLGIFNHSPPHT) the chain is Extracellular. N-linked (GlcNAc...) asparagine glycosylation occurs at Asn5. The chain crosses the membrane as a helical span at residues 26 to 49 (FLFFLVLGIFLVAFMGNSVMVLLI). Residues 50–57 (YLDTQLHT) are Cytoplasmic-facing. Residues 58–79 (PMYFLLSQLSLMDLMLICTTVP) traverse the membrane as a helical segment. At 80–100 (KMAFNYLSGSKSISMAGCVTQ) the chain is on the extracellular side. Cys97 and Cys189 are disulfide-bonded. A helical transmembrane segment spans residues 101 to 120 (IFFYISLSGSECFLLAVMAY). At 121-139 (DRYIAICHPLRYTNLMNPK) the chain is on the cytoplasmic side. Residues 140–158 (ICGLMATFSWILGSTDGII) traverse the membrane as a helical segment. Residues 159 to 195 (DAVATFSFSFCGSREIAHFFCEFPSLLILSCNDTSIF) are Extracellular-facing. Asn190 is a glycosylation site (N-linked (GlcNAc...) asparagine). A helical membrane pass occupies residues 196–219 (EEVIFICCIVMLVFPVAIIIASYA). Residues 220–236 (RVILAVIHMGSGEGRCK) lie on the Cytoplasmic side of the membrane. A helical transmembrane segment spans residues 237–259 (AFTTCSSHLMVVGMYYGAALFMY). At 260–272 (IRPTSDHSPTQDK) the chain is on the extracellular side. The helical transmembrane segment at 273-292 (MVSVFYTILTPMLNPLIYSL) threads the bilayer. Residues 293–347 (RNKEVTRAFMKILGKGKSESELPHKLYVLLFAKFFFLISIFFYDVKILALIMYIA) lie on the Cytoplasmic side of the membrane.

Belongs to the G-protein coupled receptor 1 family.

The protein localises to the cell membrane. Functionally, odorant receptor. This chain is Olfactory receptor 2M2 (OR2M2), found in Homo sapiens (Human).